A 435-amino-acid polypeptide reads, in one-letter code: Glutamyl-tRNA reductase (435 aa).

Substrate-binding positions include 50 to 53, serine 110, 115 to 117, and glutamine 121; these read TCNR and ETQ. Cysteine 51 acts as the Nucleophile in catalysis. Position 189–194 (189–194) interacts with NADP(+); sequence GAGEMS.

This sequence belongs to the glutamyl-tRNA reductase family. In terms of assembly, homodimer.

The catalysed reaction is (S)-4-amino-5-oxopentanoate + tRNA(Glu) + NADP(+) = L-glutamyl-tRNA(Glu) + NADPH + H(+). It participates in porphyrin-containing compound metabolism; protoporphyrin-IX biosynthesis; 5-aminolevulinate from L-glutamyl-tRNA(Glu): step 1/2. Its function is as follows. Catalyzes the NADPH-dependent reduction of glutamyl-tRNA(Glu) to glutamate 1-semialdehyde (GSA). The protein is Glutamyl-tRNA reductase of Campylobacter lari (strain RM2100 / D67 / ATCC BAA-1060).